We begin with the raw amino-acid sequence, 337 residues long: MKAAVITKDHTIEVKDTKLRPLKYGEALLEMEYCGVCHTDLHVKNGDFGDETGRITGHEGIGIVKQVGEGVTSLKVGDRASVAWFFKGCGHCEYCVSGNETLCRNVENAGYTVDGAMAEECIVVADYSVKVPDGLDPAVASSITCAGVTTYKAVKVSQIQPGQWLAIYGLGGLGNLALQYAKNVFNAKVIAIDVNDEQLAFAKELGADMVINPKNEDAAKIIQEKVGGAHATVVTAVAKSAFNSAVEAIRAGGRVVAVGLPPEKMDLSIPRLVLDGIEVLGSLVGTREDLKEAFQFAAEGKVKPKVTKRKVEEINQIFDEMEHGKFTGRMVVDFTHH.

Positions 37, 58, 89, 92, 95, 103, and 145 each coordinate Zn(2+).

It belongs to the zinc-containing alcohol dehydrogenase family. In terms of assembly, multimeric (with different ratios of monomers). Requires Zn(2+) as cofactor.

The enzyme catalyses a primary alcohol + NAD(+) = an aldehyde + NADH + H(+). It carries out the reaction a secondary alcohol + NAD(+) = a ketone + NADH + H(+). It participates in alcohol metabolism; ethanol biosynthesis via fermentation pathway. Its activity is regulated as follows. Inhibited by ethanol. In Zymomonas mobilis subsp. mobilis (strain ATCC 31821 / ZM4 / CP4), this protein is Alcohol dehydrogenase 1 (adhA).